Here is a 484-residue protein sequence, read N- to C-terminus: UDP-N-acetylmuramate--L-alanine ligase (484 aa).

128 to 134 (GTHGKTT) contacts ATP.

Belongs to the MurCDEF family.

The protein localises to the cytoplasm. It catalyses the reaction UDP-N-acetyl-alpha-D-muramate + L-alanine + ATP = UDP-N-acetyl-alpha-D-muramoyl-L-alanine + ADP + phosphate + H(+). Its pathway is cell wall biogenesis; peptidoglycan biosynthesis. Functionally, cell wall formation. This is UDP-N-acetylmuramate--L-alanine ligase from Shewanella loihica (strain ATCC BAA-1088 / PV-4).